Consider the following 163-residue polypeptide: Putative MucR family transcriptional regulatory protein RA0938 (163 aa).

This sequence belongs to the ros/MucR family.

In Rhizobium meliloti (strain 1021) (Ensifer meliloti), this protein is Putative MucR family transcriptional regulatory protein RA0938.